The sequence spans 173 residues: 3-hydroxydecanoyl-[acyl-carrier-protein] dehydratase (173 aa).

Residue histidine 71 is part of the active site.

It belongs to the thioester dehydratase family. FabA subfamily. In terms of assembly, homodimer.

It is found in the cytoplasm. The enzyme catalyses a (3R)-hydroxyacyl-[ACP] = a (2E)-enoyl-[ACP] + H2O. It carries out the reaction (3R)-hydroxydecanoyl-[ACP] = (2E)-decenoyl-[ACP] + H2O. It catalyses the reaction (2E)-decenoyl-[ACP] = (3Z)-decenoyl-[ACP]. It participates in lipid metabolism; fatty acid biosynthesis. Functionally, necessary for the introduction of cis unsaturation into fatty acids. Catalyzes the dehydration of (3R)-3-hydroxydecanoyl-ACP to E-(2)-decenoyl-ACP and then its isomerization to Z-(3)-decenoyl-ACP. Can catalyze the dehydratase reaction for beta-hydroxyacyl-ACPs with saturated chain lengths up to 16:0, being most active on intermediate chain length. The polypeptide is 3-hydroxydecanoyl-[acyl-carrier-protein] dehydratase (Bradyrhizobium diazoefficiens (strain JCM 10833 / BCRC 13528 / IAM 13628 / NBRC 14792 / USDA 110)).